Here is a 192-residue protein sequence, read N- to C-terminus: dTTP/UTP pyrophosphatase (192 aa).

Catalysis depends on Asp72, which acts as the Proton acceptor.

The protein belongs to the Maf family. YhdE subfamily. A divalent metal cation is required as a cofactor.

The protein localises to the cytoplasm. It catalyses the reaction dTTP + H2O = dTMP + diphosphate + H(+). It carries out the reaction UTP + H2O = UMP + diphosphate + H(+). Functionally, nucleoside triphosphate pyrophosphatase that hydrolyzes dTTP and UTP. May have a dual role in cell division arrest and in preventing the incorporation of modified nucleotides into cellular nucleic acids. This is dTTP/UTP pyrophosphatase from Geobacter metallireducens (strain ATCC 53774 / DSM 7210 / GS-15).